Here is a 153-residue protein sequence, read N- to C-terminus: Ribosome maturation factor RimP (153 aa).

It belongs to the RimP family.

The protein resides in the cytoplasm. Functionally, required for maturation of 30S ribosomal subunits. In Clostridium botulinum (strain Okra / Type B1), this protein is Ribosome maturation factor RimP.